Reading from the N-terminus, the 507-residue chain is Cytochrome P450 monooxygenase helB2 (507 aa).

An N-terminal signal peptide occupies residues 1 to 22 (MALPIILCLAVILWTSWRLLDA). Cys-436 serves as a coordination point for heme.

It belongs to the cytochrome P450 family. Requires heme as cofactor.

It functions in the pathway mycotoxin biosynthesis. Its function is as follows. Cytochrome P450 monooxygenase; part of the gene cluster that mediates the biosynthesis of helvolic acid, an antibacterial nortriterpenoid. Protostadienol synthase helA cyclizes (3S)-oxidosqualene to (17Z)-protosta-17(20),24-dien-3-beta-ol (protostadienol). The synthesis of protostadienol is followed by several steps of monooxygenation, dehydrogenation, and acyl transfer to yield the final helvolic acid. Following the cyclization to the tetracyclic protostadienol by helA, cytochrome P450 monooxygenases helB1-mediated and helB2-mediated oxidation at C-4 and C-16, acyltransferase helD2-dependent acetylation of 16-OH, oxidation of C-21 by cytochrome P450 monooxygenase helB4, and short chain dehydrogenase helC-dependent oxidative decarboxylation yield the fusidane skeleton. This intermediate is further modified in three additional steps mediated by the cytochrome P450 monooxygenase helB3, the acyltransferase helD1, and the 3-ketosteroid 1-dehydrogenase helE to give helvolic acid. Compared with the late stages in the biosynthesis of helvolic acid, enzymes involved in the early stage modifications act in a relatively strict order. The hydroxylation of C-16 by helB1 and subsequent acetylation by helD2 should occur before the helB3-mediated oxidation of C-21. C-4 demethylation in fusidane-type antibiotics proceeds in an unusual manner though it is also achieved by oxidative decarboxylation. The methyl group at C-4 beta position is oxidized by helB1 and subsequently removed by the short chain dehydrogenase helC. The polypeptide is Cytochrome P450 monooxygenase helB2 (Aspergillus fumigatus (strain ATCC MYA-4609 / CBS 101355 / FGSC A1100 / Af293) (Neosartorya fumigata)).